We begin with the raw amino-acid sequence, 86 residues long: Small ribosomal subunit protein uS15c (86 aa).

Belongs to the universal ribosomal protein uS15 family. As to quaternary structure, part of the 30S ribosomal subunit.

Its subcellular location is the plastid. The polypeptide is Small ribosomal subunit protein uS15c (rps15) (Cuscuta obtusiflora (Peruvian dodder)).